A 311-amino-acid polypeptide reads, in one-letter code: HTH-type transcriptional regulator DsdC (311 aa).

One can recognise an HTH lysR-type domain in the interval 15–72 (WQLSKMHTFEVAARHQSFALAAEELSLSPSAVSHRINQLEEELGIQLFVRSHRKVELT). Residues 32 to 51 (FALAAEELSLSPSAVSHRIN) constitute a DNA-binding region (H-T-H motif).

It belongs to the LysR transcriptional regulatory family.

In terms of biological role, regulates the expression of the dsdX-dsdA operon. This is HTH-type transcriptional regulator DsdC from Escherichia coli (strain K12).